We begin with the raw amino-acid sequence, 135 residues long: RxLR effector protein Avh5 (135 aa).

An N-terminal signal peptide occupies residues 1 to 19 (MRLQFFLVMAVATLATISA). The short motif at 43–71 (RFLRTADTDIVYEPKVHNPGKKQVFIEDK) is the RxLR-dEER element. A 1,2-diacyl-sn-glycero-3-phospho-(1D-myo-inositol-3-phosphate) is bound by residues K81, K83, and K84.

The protein belongs to the RxLR effector family.

It is found in the secreted. It localises to the host cell. Functionally, effector that suppresses plant defense responses during the early stages of pathogen infection. Suppresses cell death induced by effectors and PAMPs in plant hosts. The chain is RxLR effector protein Avh5 from Phytophthora sojae (Soybean stem and root rot agent).